Reading from the N-terminus, the 35-residue chain is Delta-theraphotoxin-Hm1a (35 aa).

Disulfide bonds link C2–C16, C9–C21, and C15–C28.

Belongs to the neurotoxin 10 (Hwtx-1) family. 09 (HaTx) subfamily. In terms of tissue distribution, expressed by the venom gland.

The protein resides in the secreted. Gating-modifier toxin that potently inhibits inactivation of the mammalian Nav1.1/SCN1A sodium channel (EC(50)=38 nM). Also moderately inhibits inactivation of Nav1.2/SCN2A (EC(50)=236 nM) and Nav1.3/SCN3A (EC(50)=220 nM) when the channels are expressed in oocytes without the beta-1 auxiliary subunit. Does not inhibit inactivation of Nav1.2/SCN2A when the channel is coexpressed with the beta-1 auxiliary subunit. When tested on Nav1.1/SCN1A channel, it enhances peak current amplitude and potently delays channel inactivation in a dose-dependent manner, leading to a large sustained current. It has no effect on the voltage-dependence of steady-state activation, and induces a depolarizing shift in the voltage dependence of inactivation. In addition, it does not modify the recovery from fast inactivation in Nav1.1/SCN1A. The binding affinity and subtype selectivity of the toxin towards Nav1.1/SCN1A channel is determined by residues within both the S1-S2 and S3-S4 loops of the domain IV voltage sensor of the channel. This toxin also weakly inhibits several subtypes of voltage-gated potassium channels. It moderately blocks Kv2.1/KCNB1 (23% inhibition at 100 nM), Kv2.2/KCNB2 (19.7% at 100 nM and 51% at 300 nM), Kv4.1/KCND1 (IC(50)=280 nM), Kv4.2/KCND2 (39% at 300 nM) and Kv4.3/KCND3 (43% at 300 nM). In vivo, intracerebroventricular injection into mice elicits convulsions, spasms, tremors and rapid death. When injected into mouse hindpaw, the toxin elicits an immediate and robust response to pain. However, intraplantar injection of toxin does not cause neurogenic inflammation or alter sensitivity to heat, indicative of a modality-specific effect on mechanosensitive neurons. In Dravet syndrome mice model, intracerebroventricular infusion of this peptide rescues mice from seizures and premature death. This Heteroscodra maculata (Togo starburst tarantula) protein is Delta-theraphotoxin-Hm1a.